The chain runs to 369 residues: Phosphoserine aminotransferase (369 aa).

Residue Arg-42 participates in L-glutamate binding. Trp-101, Thr-152, Asp-176, and Gln-199 together coordinate pyridoxal 5'-phosphate. At Lys-200 the chain carries N6-(pyridoxal phosphate)lysine. 241–242 provides a ligand contact to pyridoxal 5'-phosphate; that stretch reads NT.

It belongs to the class-V pyridoxal-phosphate-dependent aminotransferase family. SerC subfamily. In terms of assembly, homodimer. Requires pyridoxal 5'-phosphate as cofactor.

It is found in the cytoplasm. It carries out the reaction O-phospho-L-serine + 2-oxoglutarate = 3-phosphooxypyruvate + L-glutamate. It catalyses the reaction 4-(phosphooxy)-L-threonine + 2-oxoglutarate = (R)-3-hydroxy-2-oxo-4-phosphooxybutanoate + L-glutamate. It participates in amino-acid biosynthesis; L-serine biosynthesis; L-serine from 3-phospho-D-glycerate: step 2/3. Its pathway is cofactor biosynthesis; pyridoxine 5'-phosphate biosynthesis; pyridoxine 5'-phosphate from D-erythrose 4-phosphate: step 3/5. In terms of biological role, catalyzes the reversible conversion of 3-phosphohydroxypyruvate to phosphoserine and of 3-hydroxy-2-oxo-4-phosphonooxybutanoate to phosphohydroxythreonine. This is Phosphoserine aminotransferase from Delftia acidovorans (strain DSM 14801 / SPH-1).